The primary structure comprises 561 residues: DISARM protein DrmB (561 aa).

Its subcellular location is the cytoplasm. In terms of biological role, component of antiviral defense system DISARM (defense island system associated with restriction-modification), composed of DrmE, DrmA, DrmB, DrmC and DrmMII. DISARM is probably a multi-gene restriction module, this subunit has an unknown function. Expression of DISARM in B.subtilis (strain BEST7003) confers resistance to phages Nf, phi29, phi105, phi3T, SPO1, SPR and SPP1. Protection is over 10(7)-fold against phi3T, 10(4)-10(5)-fold against Nf, phi29, phi105 and SPR, 100-fold against SPO1 and 10-fold against SPP1. DISARM does not interfere with phage adsorption, but instead interferes with (phi3T) DNA replication early in its cycle, preventing replication, circularization and lysogeny and probably causes phage DNA degradation (DNA is degraded in SPP1-infected cells). The chain is DISARM protein DrmB from Bacillus paralicheniformis (strain ATCC 9945a / NCIMB 11709 / CD-2).